The following is a 281-amino-acid chain: Ribosomal RNA small subunit methyltransferase I (281 aa).

It belongs to the methyltransferase superfamily. RsmI family.

Its subcellular location is the cytoplasm. It catalyses the reaction cytidine(1402) in 16S rRNA + S-adenosyl-L-methionine = 2'-O-methylcytidine(1402) in 16S rRNA + S-adenosyl-L-homocysteine + H(+). In terms of biological role, catalyzes the 2'-O-methylation of the ribose of cytidine 1402 (C1402) in 16S rRNA. The chain is Ribosomal RNA small subunit methyltransferase I from Erythrobacter litoralis (strain HTCC2594).